A 241-amino-acid chain; its full sequence is Ribonuclease PH (241 aa).

Residues R89 and 127-129 contribute to the phosphate site; that span reads GTR.

The protein belongs to the RNase PH family. Homohexameric ring arranged as a trimer of dimers.

It carries out the reaction tRNA(n+1) + phosphate = tRNA(n) + a ribonucleoside 5'-diphosphate. Phosphorolytic 3'-5' exoribonuclease that plays an important role in tRNA 3'-end maturation. Removes nucleotide residues following the 3'-CCA terminus of tRNAs; can also add nucleotides to the ends of RNA molecules by using nucleoside diphosphates as substrates, but this may not be physiologically important. Probably plays a role in initiation of 16S rRNA degradation (leading to ribosome degradation) during starvation. The polypeptide is Ribonuclease PH (Xanthomonas campestris pv. campestris (strain 8004)).